The primary structure comprises 214 residues: Probable GTP-binding protein EngB (214 aa).

In terms of domain architecture, EngB-type G spans 40-212; it reads SLPEIVFVGK…KASFAQCIKH (173 aa). Residues 48–55, 75–79, 93–96, 160–163, and 191–193 each bind GTP; these read GKSNVGKS, GRTRQ, DLPG, TKSD, and VSS. Mg(2+) is bound by residues S55 and T77.

It belongs to the TRAFAC class TrmE-Era-EngA-EngB-Septin-like GTPase superfamily. EngB GTPase family. The cofactor is Mg(2+).

In terms of biological role, necessary for normal cell division and for the maintenance of normal septation. This is Probable GTP-binding protein EngB from Rickettsia prowazekii (strain Madrid E).